The primary structure comprises 228 residues: Carboxylesterase SOBER1 (228 aa).

Residues Ser-106, Asp-160, and His-192 each act as charge relay system in the active site.

The protein belongs to the AB hydrolase superfamily. AB hydrolase 2 family.

In terms of biological role, possesses carboxylesterase activity in vitro with a preference for short acyl chain substrates. Functions as a negative regulator of the hypersensitive response (HR) triggered by the bacterial type III effector protein AvrBsT. Possesses phospholipase A2 (PLA2) activity and hydrolyzes phosphatidylcholine (PC), a lipid that is hydrolyzed by phospholipase D (PLD) to produce phosphatidic acid (PA). Required to suppress AvrBsT-dependent HR and PLD-dependent production of PA in response to AvrBsT elicitation. In Arabidopsis thaliana (Mouse-ear cress), this protein is Carboxylesterase SOBER1.